Reading from the N-terminus, the 514-residue chain is Cardiolipin synthase 2 (514 aa).

A run of 3 helical transmembrane segments spans residues Leu-7–Val-27, Ile-41–Phe-61, and Leu-71–Phe-91. PLD phosphodiesterase domains follow at residues Ile-249–Tyr-276 and Glu-427–Ser-454. Residues His-254, Lys-256, Asp-261, His-432, Lys-434, and Asp-439 contribute to the active site.

Belongs to the phospholipase D family. Cardiolipin synthase subfamily.

The protein localises to the cell membrane. It catalyses the reaction 2 a 1,2-diacyl-sn-glycero-3-phospho-(1'-sn-glycerol) = a cardiolipin + glycerol. In terms of biological role, catalyzes the reversible phosphatidyl group transfer from one phosphatidylglycerol molecule to another to form cardiolipin (CL) (diphosphatidylglycerol) and glycerol. This Bacillus cereus (strain ATCC 14579 / DSM 31 / CCUG 7414 / JCM 2152 / NBRC 15305 / NCIMB 9373 / NCTC 2599 / NRRL B-3711) protein is Cardiolipin synthase 2 (cls2).